Consider the following 361-residue polypeptide: Salt tolerance receptor-like cytoplasmic kinase 1 (361 aa).

S-palmitoyl cysteine attachment occurs at residues C5, C10, and C14. The region spanning 67–347 is the Protein kinase domain; sequence GFSSRVIGHG…RALQEKTSAL (281 aa). ATP is bound by residues 73–81 and K95; that span reads IGHGGFSTV. Catalysis depends on D195, which acts as the Proton acceptor.

It belongs to the protein kinase superfamily. Ser/Thr protein kinase family. Self-interacts. Interacts with CATA, CATB and CATC at the plasma membrane. Post-translationally, palmitoylated. Palmotylation at Cys-5, Cys-10 and Cys-14 by DHHC9 is required for plasma membrane targeting and STRK1 function. In terms of processing, autophosphorylated. As to expression, accumulates in seeds. Mainly expressed in young roots, and, to a lower extent, in leaf veins, seedlings, stems, leaf sheath and young spikelet.

It localises to the cell membrane. It catalyses the reaction L-seryl-[protein] + ATP = O-phospho-L-seryl-[protein] + ADP + H(+). The enzyme catalyses L-threonyl-[protein] + ATP = O-phospho-L-threonyl-[protein] + ADP + H(+). The catalysed reaction is L-tyrosyl-[protein] + ATP = O-phospho-L-tyrosyl-[protein] + ADP + H(+). Its function is as follows. Acts probably as a dual specificity protein kinase. Regulates hydrogen peroxide (H(2)O(2)) homeostasis and improves salt tolerance by phosphorylating tyrosine residues of CATC thus activating its catalase activity. Promotes growth at the seedling stage and prevents grain yield loss under salt stress conditions. The sequence is that of Salt tolerance receptor-like cytoplasmic kinase 1 from Oryza sativa subsp. japonica (Rice).